We begin with the raw amino-acid sequence, 63 residues long: Odorranain-B1 (63 aa).

Positions 1–22 are cleaved as a signal peptide; the sequence is MFTTKKPLLLLFFLGIISLSVC. Positions 23–41 are excised as a propeptide; it reads EQERDADEEDGGEVTEEEV.

It belongs to the frog skin active peptide (FSAP) family. Brevinin subfamily. In terms of tissue distribution, expressed by the skin glands.

It localises to the secreted. In Odorrana hainanensis (Odor frog), this protein is Odorranain-B1.